A 43-amino-acid polypeptide reads, in one-letter code: Gene 67 protein (43 aa).

In Mycobacterium phage L5 (Mycobacteriophage L5), this protein is Gene 67 protein (67).